The sequence spans 991 residues: Translation initiation factor IF-2 (991 aa).

Disordered stretches follow at residues 58 to 82 (EGKK…GRSR) and 106 to 405 (QARA…PAPQ). Low complexity predominate over residues 106–164 (QARADAAASDAAPAEPAPAAAEPSASAPVTAPVNAPAADAPQAPATAAPDTAAPAAETP). Residues 165-175 (SQPPAVEPQPA) show a composition bias toward pro residues. Low complexity-rich tracts occupy residues 190-206 (AKPA…AAVE), 221-258 (AVQA…ASKP), and 267-276 (APVPVAAPAV). A compositionally biased stretch (basic and acidic residues) spans 279-289 (AGREEARRAAE). The segment covering 379-388 (RAGGKGGKGG) has biased composition (gly residues). Residues 395–405 (QAERRHEPAPQ) are compositionally biased toward basic and acidic residues. Residues 492-659 (PRAPVVTVMG…NVLLQAEILE (168 aa)) form the tr-type G domain. The interval 501 to 508 (GHVDHGKT) is G1. 501–508 (GHVDHGKT) lines the GTP pocket. Positions 526–530 (GITQH) are G2. The G3 stretch occupies residues 547-550 (DTPG). GTP is bound by residues 547 to 551 (DTPGH) and 601 to 604 (NKID). The tract at residues 601–604 (NKID) is G4. Residues 637 to 639 (SAK) are G5.

Belongs to the TRAFAC class translation factor GTPase superfamily. Classic translation factor GTPase family. IF-2 subfamily.

It is found in the cytoplasm. Functionally, one of the essential components for the initiation of protein synthesis. Protects formylmethionyl-tRNA from spontaneous hydrolysis and promotes its binding to the 30S ribosomal subunits. Also involved in the hydrolysis of GTP during the formation of the 70S ribosomal complex. This Bordetella petrii (strain ATCC BAA-461 / DSM 12804 / CCUG 43448) protein is Translation initiation factor IF-2.